The following is a 192-amino-acid chain: MAPRRPAKRLVTALCRAFSGRGCQLAPKRGAERRDAAPSRVSRFCPPRKSRHDWIGPPDKYSNLRPIHFYIPENESPLEQKLRELRQETQEWNQQFWADQNLTFHKEKEEFVRSRLKAKGLDLRTASGQKATLNAEEMAEFYKEFLSKNFQKHMYYNRDWYKRNFAITFFMGKVALERIWNKLRPKQKKTSS.

The N-terminal 10 residues, 1-10 (MAPRRPAKRL), are a transit peptide targeting the mitochondrion.

Belongs to the COA8 family. Post-translationally, N-terminal mitochondrial targeting sequence is cleaved from the mature protein once in the mitochondrion. In normal conditions, the cytoplasmic precursor protein is rapidly degraded by the ubiquitination-proteasome system (UPS). Oxidative stress induces protein stabilization and import into mitochondria where it protects COX from degradation.

Its subcellular location is the mitochondrion inner membrane. Its function is as follows. Required for cytochrome c complex (COX) IV assembly and function Protects COX assembly from oxidation-induced degradation, COX being the terminal component of the mitochondrial respiratory chain. The protein is Cytochrome c oxidase assembly factor 8 (COA8) of Bos taurus (Bovine).